We begin with the raw amino-acid sequence, 239 residues long: 1-(5-phosphoribosyl)-5-[(5-phosphoribosylamino)methylideneamino] imidazole-4-carboxamide isomerase (239 aa).

Residue Asp-8 is the Proton acceptor of the active site. Catalysis depends on Asp-129, which acts as the Proton donor.

It belongs to the HisA/HisF family.

Its subcellular location is the cytoplasm. The enzyme catalyses 1-(5-phospho-beta-D-ribosyl)-5-[(5-phospho-beta-D-ribosylamino)methylideneamino]imidazole-4-carboxamide = 5-[(5-phospho-1-deoxy-D-ribulos-1-ylimino)methylamino]-1-(5-phospho-beta-D-ribosyl)imidazole-4-carboxamide. It participates in amino-acid biosynthesis; L-histidine biosynthesis; L-histidine from 5-phospho-alpha-D-ribose 1-diphosphate: step 4/9. The chain is 1-(5-phosphoribosyl)-5-[(5-phosphoribosylamino)methylideneamino] imidazole-4-carboxamide isomerase from Cereibacter sphaeroides (strain ATCC 17025 / ATH 2.4.3) (Rhodobacter sphaeroides).